Reading from the N-terminus, the 289-residue chain is Dehydrodolichyl diphosphate synthase 4 (289 aa).

Residues L2–P22 form a helical membrane-spanning segment.

It belongs to the UPP synthase family. It depends on Mg(2+) as a cofactor.

Its subcellular location is the endoplasmic reticulum membrane. The protein operates within protein modification; protein glycosylation. In terms of biological role, catalyzes cis-prenyl chain elongation to produce the polyprenyl backbone of dolichol, a glycosyl carrier-lipid required for the biosynthesis of several classes of glycoprotein. This is Dehydrodolichyl diphosphate synthase 4 from Arabidopsis thaliana (Mouse-ear cress).